The primary structure comprises 441 residues: GTPase Der (441 aa).

2 EngA-type G domains span residues 2 to 164 (QKVA…PADE) and 173 to 343 (IRIS…EKWQ). Residues 8–15 (GRPNVGKS), 55–59 (DTGGL), 116–119 (NKID), 179–186 (GRPNVGKS), 226–230 (DTAGI), and 288–291 (NKWD) each bind GTP. Residues 344–428 (SRIPTAELNR…PVRLKWKEKG (85 aa)) form the KH-like domain.

It belongs to the TRAFAC class TrmE-Era-EngA-EngB-Septin-like GTPase superfamily. EngA (Der) GTPase family. As to quaternary structure, associates with the 50S ribosomal subunit.

In terms of biological role, GTPase that plays an essential role in the late steps of ribosome biogenesis. The polypeptide is GTPase Der (Deinococcus geothermalis (strain DSM 11300 / CIP 105573 / AG-3a)).